The following is a 68-amino-acid chain: Large ribosomal subunit protein bL31 (68 aa).

Residues C17, C19, C37, and C40 each coordinate Zn(2+).

Belongs to the bacterial ribosomal protein bL31 family. Type A subfamily. Part of the 50S ribosomal subunit. Zn(2+) serves as cofactor.

Functionally, binds the 23S rRNA. In Dehalococcoides mccartyi (strain CBDB1), this protein is Large ribosomal subunit protein bL31.